Reading from the N-terminus, the 126-residue chain is Large ribosomal subunit protein mL52 (126 aa).

A mitochondrion-targeting transit peptide spans 1–28 (MLKITKICLASSATSTAQRSIALTAPRA).

This sequence belongs to the mitochondrion-specific ribosomal protein mL52 family. As to quaternary structure, component of the mitochondrial ribosome large subunit (39S) which comprises a 16S rRNA and about 50 distinct proteins.

The protein localises to the mitochondrion. In Drosophila melanogaster (Fruit fly), this protein is Large ribosomal subunit protein mL52 (mRpL52).